Here is a 658-residue protein sequence, read N- to C-terminus: Putative arrestin-related trafficking adapter C2D10.04 (658 aa).

2 disordered regions span residues 21 to 107 (LHHQ…LTWS) and 638 to 658 (REEA…EIPR). The segment covering 39–81 (NRSSNSGLNRRNSVFGLPSSGLSSRLSKPSLSSINNSNNSSSN) has biased composition (low complexity). Positions 96 to 107 (RNMSNKPPLTWS) are enriched in polar residues. Phosphoserine is present on Ser653.

It belongs to the ALY1 family.

The protein localises to the cytoplasm. Its function is as follows. May regulate endocytosis in response to extracellular stimuli. In Schizosaccharomyces pombe (strain 972 / ATCC 24843) (Fission yeast), this protein is Putative arrestin-related trafficking adapter C2D10.04.